Here is a 448-residue protein sequence, read N- to C-terminus: Putative sodium-coupled neutral amino acid transporter 11 (448 aa).

Residues 1 to 20 (MESERSCLLSSHDAGKGGSS) form a disordered region. Helical transmembrane passes span 22–42 (VSSA…IGLP), 52–72 (MGLL…ILLV), 94–114 (IGYI…MISY), 143–163 (FVIA…RDIA), 165–185 (LGKV…TVVV), 200–220 (AWVF…FALI), 246–266 (ISVG…YATF), 286–306 (TFGR…ECFV), 324–344 (SSHV…SLSY), 346–366 (CLGI…MFIF), and 389–409 (MILV…ALFP). N-linked (GlcNAc...) asparagine glycans are attached at residues Asn425, Asn440, and Asn444.

This sequence belongs to the amino acid/polyamine transporter 2 family.

It is found in the membrane. Its function is as follows. Putative sodium-dependent amino acid/proton antiporter. The polypeptide is Putative sodium-coupled neutral amino acid transporter 11 (slc38a11) (Danio rerio (Zebrafish)).